The primary structure comprises 170 residues: CFA/I fimbrial subunit B (170 aa).

An N-terminal signal peptide occupies residues Met1 to Ala23.

This sequence belongs to the fimbrial CS1 protein family. As to quaternary structure, CFA/I fimbriae are rather rigid, thread-like filaments of 0.5-1 micrometer, with an apparent axial hole, and a diameter of 7 nanometers. A single CFA/I fimbria consists of about 100 identical protein subunits.

The protein resides in the fimbrium. Fimbriae (also called pili), polar filaments radiating from the surface of the bacterium to a length of 0.5-1.5 micrometers and numbering 100-300 per cell, enable bacteria to colonize the epithelium of specific host organs. In Escherichia coli O78:H11 (strain H10407 / ETEC), this protein is CFA/I fimbrial subunit B (cfaB).